Here is a 296-residue protein sequence, read N- to C-terminus: NAD kinase (296 aa).

The active-site Proton acceptor is the aspartate 74. Residues 74-75, 148-149, arginine 176, aspartate 178, and 189-194 each bind NAD(+); these read DG, ND, and TAYALS.

It belongs to the NAD kinase family. The cofactor is a divalent metal cation.

It localises to the cytoplasm. The catalysed reaction is NAD(+) + ATP = ADP + NADP(+) + H(+). Involved in the regulation of the intracellular balance of NAD and NADP, and is a key enzyme in the biosynthesis of NADP. Catalyzes specifically the phosphorylation on 2'-hydroxyl of the adenosine moiety of NAD to yield NADP. The chain is NAD kinase from Nitrosomonas eutropha (strain DSM 101675 / C91 / Nm57).